We begin with the raw amino-acid sequence, 283 residues long: MITGKTHVTGIMGHPLGHSLSPIMHNAAFRSLGMDWIYVPFPVKPENLKAAVEGLRALGVEGVNVTIPHKEAVLEYIDDIHGTAALIGAVNTLKFDDGTVRGYNTDASGCLRALEEVTSVEGSSVLILGAGGAARACAFQLAEKGASDITILNRTPEKARLLAEDMADKLGFEASYGGYELIQGSVKSADILIDTTPVGMHPHTDDRPLVGAELMHEGLVVHDLVYNPQRTVLLREAERASAIPVSGIRMLLYQGVEAFRIWTGRDPPLDVMEDALKRVLNRD.

Residues 19 to 21 (SLS) and T66 contribute to the shikimate site. Residue K70 is the Proton acceptor of the active site. N91 and D106 together coordinate shikimate. Residues 129–133 (GAGGA), 153–158 (NRTPEK), and L224 each bind NADP(+). Shikimate is bound at residue Y226. G247 is a binding site for NADP(+).

It belongs to the shikimate dehydrogenase family. As to quaternary structure, homodimer.

The catalysed reaction is shikimate + NADP(+) = 3-dehydroshikimate + NADPH + H(+). It functions in the pathway metabolic intermediate biosynthesis; chorismate biosynthesis; chorismate from D-erythrose 4-phosphate and phosphoenolpyruvate: step 4/7. In terms of biological role, involved in the biosynthesis of the chorismate, which leads to the biosynthesis of aromatic amino acids. Catalyzes the reversible NADPH linked reduction of 3-dehydroshikimate (DHSA) to yield shikimate (SA). This Methanothermobacter thermautotrophicus (strain ATCC 29096 / DSM 1053 / JCM 10044 / NBRC 100330 / Delta H) (Methanobacterium thermoautotrophicum) protein is Shikimate dehydrogenase (NADP(+)).